Reading from the N-terminus, the 235-residue chain is Cobalt transport protein CbiM (235 aa).

The signal sequence occupies residues 1–33 (MRYLKFFLLLVFLVPSFGFSMHIMEGFLPPTHA). 6 helical membrane passes run 34–51 (LIWY…LFTI), 63–83 (MLLA…IPSV), 95–115 (LGAI…VLLF), 118–138 (LLLA…MAIV), 156–176 (NIAV…TTSF), and 199–219 (IFAI…VVVI).

The protein belongs to the CbiM family. Forms an energy-coupling factor (ECF) transporter complex composed of an ATP-binding protein (A component, CbiO), a transmembrane protein (T component, CbiQ) and 2 possible substrate-capture proteins (S components, CbiM and CbiN) of unknown stoichimetry.

It localises to the cell inner membrane. It participates in cofactor biosynthesis; adenosylcobalamin biosynthesis. Its function is as follows. Part of the energy-coupling factor (ECF) transporter complex CbiMNOQ involved in cobalt import. This is Cobalt transport protein CbiM from Thermosipho melanesiensis (strain DSM 12029 / CIP 104789 / BI429).